We begin with the raw amino-acid sequence, 326 residues long: Zinc-dependent endopolyphosphatase (326 aa).

At M1 to A9 the chain is on the cytoplasmic side. A helical membrane pass occupies residues A10–F30. Residues K31–S326 are Vacuolar-facing. Residues N90 and N241 are each glycosylated (N-linked (GlcNAc...) asparagine).

The protein belongs to the metallophosphoesterase superfamily. As to quaternary structure, interacts with PPN1. Requires Zn(2+) as cofactor. Co(2+) serves as cofactor. The cofactor is Mg(2+).

It is found in the vacuole membrane. It catalyses the reaction [phosphate](n+1) + n H2O = (n+1) phosphate + n H(+). With respect to regulation, not sensitive to heparin inhibition. Functionally, catalyzes the hydrolysis of inorganic polyphosphate (polyP) chains of many hundreds of phosphate residues into shorter lengths. Exclusively shows endopolyphosphatase activity, cleaving inside the polyP chain. Together with PPN1, responsible for a substantial fraction of polyphosphatase activity that is necessary to mobilize polyP stores in response to phosphate scarcity. The polypeptide is Zinc-dependent endopolyphosphatase (Saccharomyces cerevisiae (strain ATCC 204508 / S288c) (Baker's yeast)).